The following is a 952-amino-acid chain: Autophagy-related protein 9 (952 aa).

Disordered stretches follow at residues 1–33 (MSSS…QGIP) and 69–159 (NQQL…SSKI). Residues 1–260 (MSSSSYNPYK…RGLLNIVLSR (260 aa)) lie on the Cytoplasmic side of the membrane. Low complexity predominate over residues 115-133 (KSSSLLNSDSDSDLSSSED). Residues 142-159 (QIPSTPIETENQGSSSKI) show a composition bias toward polar residues. Residues 261 to 281 (GFDLIILIFILIFTVFLKWGI) traverse the membrane as a helical segment. The Lumenal segment spans residues 282–308 (DYSIFFDNLHQEESKHITLNDMIIPNY). Residues 309–329 (FATIPLSIKFILFGFSVYILL) traverse the membrane as a helical segment. The Cytoplasmic segment spans residues 330-490 (RSVQLYLDYN…RELTSRFKLA (161 aa)). An intramembrane segment occupies 491 to 511 (AIINLILSPFIVIYFVLLYFF). The Cytoplasmic segment spans residues 512–577 (RYFNEYKSNP…KGFLVVNLMR (66 aa)). Residues 578–598 (LINFISGSILAVLVIMGILLE) traverse the membrane as a helical segment. The Lumenal portion of the chain corresponds to 599 to 614 (DENHSFWSFEITDGRS). A helical membrane pass occupies residues 615–635 (ALFYISIFGTIWAITASSATG). Over 636-702 (TSHESTISTT…KNEFCQLYCL (67 aa)) the chain is Cytoplasmic. An intramembrane segment occupies 703–723 (KIIIIINEILSSVLTPFILWF). At 724–952 (KISHNSGNII…NQFYKQDINR (229 aa)) the chain is on the cytoplasmic side. Basic and acidic residues predominate over residues 806–818 (TKISKSESERSSD). Disordered regions lie at residues 806–832 (TKIS…NDEE) and 855–889 (YGGS…NPIQ). Residues 819 to 832 (DESGNEQDYDNDEE) are compositionally biased toward acidic residues. Over residues 867–877 (QQQQHPQNQNQ) the composition is skewed to low complexity.

This sequence belongs to the ATG9 family. Homotrimer; forms a homotrimer with a central pore that forms a path between the two membrane leaflets. Post-translationally, phosphorylated by ATG1. ATG1 phosphorylation is required for preautophagosome elongation.

The protein resides in the preautophagosomal structure membrane. It localises to the cytoplasmic vesicle membrane. Its subcellular location is the golgi apparatus membrane. The protein localises to the endoplasmic reticulum membrane. The catalysed reaction is a 1,2-diacyl-sn-glycero-3-phosphocholine(in) = a 1,2-diacyl-sn-glycero-3-phosphocholine(out). The enzyme catalyses a 1,2-diacyl-sn-glycero-3-phospho-L-serine(in) = a 1,2-diacyl-sn-glycero-3-phospho-L-serine(out). It catalyses the reaction a 1,2-diacyl-sn-glycero-3-phosphoethanolamine(in) = a 1,2-diacyl-sn-glycero-3-phosphoethanolamine(out). It carries out the reaction a 1,2-diacyl-sn-glycero-3-phospho-(1D-myo-inositol-3-phosphate)(in) = a 1,2-diacyl-sn-glycero-3-phospho-(1D-myo-inositol-3-phosphate)(out). Functionally, phospholipid scramblase involved in autophagy and cytoplasm to vacuole transport (Cvt) vesicle formation. Cycles between the preautophagosomal structure/phagophore assembly site (PAS) and the cytoplasmic vesicle pool and supplies membrane for the growing autophagosome. Lipid scramblase activity plays a key role in preautophagosomal structure/phagophore assembly by distributing the phospholipids that arrive through atg2 from the cytoplasmic to the luminal leaflet of the bilayer, thereby driving autophagosomal membrane expansion. Required for mitophagy. Also involved in endoplasmic reticulum-specific autophagic process and is essential for the survival of cells subjected to severe ER stress. Different machineries are required for anterograde trafficking to the PAS during either the Cvt pathway or bulk autophagy and for retrograde trafficking. In Candida albicans (strain SC5314 / ATCC MYA-2876) (Yeast), this protein is Autophagy-related protein 9 (ATG9).